Consider the following 249-residue polypeptide: Inhibitor of growth protein 4 (249 aa).

Positions 25 to 118 (FQLMRDLDQR…ADLKEKQIES (94 aa)) form a coiled coil. 3 positions are modified to N6-acetyllysine: lysine 112, lysine 127, and lysine 129. Residues 115 to 163 (QIESSDYDSSSSKGKKKGRTQKEKKAARARSKGKNSDEEAPKAAQKKLK) are disordered. A Bipartite nuclear localization signal motif is present at residues 127-148 (KGKKKGRTQKEKKAARARSKGK). Arginine 133 is subject to Citrulline. N6-acetyllysine occurs at positions 146, 148, and 156. Arginine 166 is subject to Citrulline. The PHD-type zinc-finger motif lies at 196–245 (PTYCLCHQVSYGEMIGCDNPDCSIEWFHFACVGLTTKPRGKWFCPRCSQE). Zn(2+)-binding residues include cysteine 199, cysteine 201, cysteine 212, cysteine 217, histidine 223, cysteine 226, cysteine 239, and cysteine 242.

It belongs to the ING family. In terms of assembly, homodimer. Component of the HBO1 complex composed of KAT7/HBO1, MEAF6, ING4 or ING5, and one scaffold subunit: complexes containing BRPF scaffold (BRPF1, BRD1/BRPF2 or BRPF3) direct KAT7/HBO1 specificity towards H3K14ac, while complexes containing JADE scaffold (JADE1, JADE2 and JADE3) mediate acetylation of histone H4. Interacts with H3K4me3 and to a lesser extent with H3K4me2, the interaction augments KAT7/HBO1 acetylation activity on H3 tails. Interacts with EP300, RELA and TP53; these interactions may be indirect. Interacts with EGLN1. As to quaternary structure, interacts with BCL2A1. Citrullination by PADI4 within the nuclear localization signal disrupts the interaction with p53 and increases susceptibility to degradation. In terms of tissue distribution, isoform 2, isoform 3, isoform 4 and isoform 5 are expressed in the mammary gland, ovary, spleen and muscle. As to expression, expressed in the mammary gland, ovary, spleen and muscle.

Its subcellular location is the nucleus. Its function is as follows. Component of HBO1 complexes, which specifically mediate acetylation of histone H3 at 'Lys-14' (H3K14ac), and have reduced activity toward histone H4. Through chromatin acetylation it may function in DNA replication. May inhibit tumor progression by modulating the transcriptional output of signaling pathways which regulate cell proliferation. Can suppress brain tumor angiogenesis through transcriptional repression of RELA/NFKB3 target genes when complexed with RELA. May also specifically suppress loss of contact inhibition elicited by activated oncogenes such as MYC. Represses hypoxia inducible factor's (HIF) activity by interacting with HIF prolyl hydroxylase 2 (EGLN1). Can enhance apoptosis induced by serum starvation in mammary epithelial cell line HC11. In Mus musculus (Mouse), this protein is Inhibitor of growth protein 4 (Ing4).